A 622-amino-acid polypeptide reads, in one-letter code: Serine/threonine-protein kinase MAK (622 aa).

Residues 4-284 (YTTMKQLGDG…ASQALKHPYF (281 aa)) enclose the Protein kinase domain. ATP-binding positions include 10–18 (LGDGTYGSV) and lysine 33. Aspartate 125 acts as the Proton acceptor in catalysis. The residue at position 157 (threonine 157) is a Phosphothreonine; by autocatalysis. A Phosphotyrosine; by autocatalysis modification is found at tyrosine 159. Residues 301 to 371 (QTLHKQLQPL…QGHQKPPQTM (71 aa)) form a disordered region. Positions 336–355 (QPKQGHQPLQTIQPPQNTVT) are enriched in polar residues.

The protein belongs to the protein kinase superfamily. CMGC Ser/Thr protein kinase family. CDC2/CDKX subfamily. Interacts with AR and CDK20. Found in a complex containing MAK, AR and NCOA3. Interacts with FZR1 (via WD repeats). Interacts with RP1. It depends on Mg(2+) as a cofactor. Autophosphorylated. Phosphorylated on serine and threonine residues. In pre- and postmeiotic male germ cells in testis. In photoreceptor cells of the retina and in the olfactory receptors, and in certain epithelia of the respiratory tract and choroid plexus (brain).

It is found in the nucleus. It localises to the cytoplasm. Its subcellular location is the cytoskeleton. The protein resides in the microtubule organizing center. The protein localises to the centrosome. It is found in the spindle. It localises to the midbody. Its subcellular location is the cell projection. The protein resides in the cilium. The protein localises to the photoreceptor outer segment. It is found in the photoreceptor inner segment. The enzyme catalyses L-seryl-[protein] + ATP = O-phospho-L-seryl-[protein] + ADP + H(+). It carries out the reaction L-threonyl-[protein] + ATP = O-phospho-L-threonyl-[protein] + ADP + H(+). Functionally, essential for the regulation of ciliary length and required for the long-term survival of photoreceptors. Could have an important function in sensory cells and in spermatogenesis. May participate in signaling pathways used in visual and olfactory sensory transduction. Phosphorylates FZR1 in a cell cycle-dependent manner. Plays a role in the transcriptional coactivation of AR. This Mus musculus (Mouse) protein is Serine/threonine-protein kinase MAK (Mak).